The chain runs to 267 residues: NAD-capped RNA hydrolase NudC (267 aa).

Arginine 70 is a substrate binding site. Residues cysteine 99 and cysteine 102 each coordinate Zn(2+). Substrate is bound at residue glutamate 112. The Zn(2+) site is built by cysteine 117 and cysteine 122. Tyrosine 127 lines the substrate pocket. The Nudix hydrolase domain occupies proline 128 to threonine 257. 3 residues coordinate a divalent metal cation: alanine 166, glutamate 182, and glutamate 186. The short motif at glycine 167 to glycine 188 is the Nudix box element. Glutamine 200–serine 207 serves as a coordination point for substrate. A divalent metal cation is bound at residue glutamate 227. Alanine 250 contributes to the substrate binding site.

It belongs to the Nudix hydrolase family. NudC subfamily. As to quaternary structure, homodimer. Requires Mg(2+) as cofactor. It depends on Mn(2+) as a cofactor. Zn(2+) serves as cofactor.

It catalyses the reaction a 5'-end NAD(+)-phospho-ribonucleoside in mRNA + H2O = a 5'-end phospho-adenosine-phospho-ribonucleoside in mRNA + beta-nicotinamide D-ribonucleotide + 2 H(+). The catalysed reaction is NAD(+) + H2O = beta-nicotinamide D-ribonucleotide + AMP + 2 H(+). It carries out the reaction NADH + H2O = reduced beta-nicotinamide D-ribonucleotide + AMP + 2 H(+). Its function is as follows. mRNA decapping enzyme that specifically removes the nicotinamide adenine dinucleotide (NAD) cap from a subset of mRNAs by hydrolyzing the diphosphate linkage to produce nicotinamide mononucleotide (NMN) and 5' monophosphate mRNA. The NAD-cap is present at the 5'-end of some mRNAs and stabilizes RNA against 5'-processing. Has preference for mRNAs with a 5'-end purine. Catalyzes the hydrolysis of a broad range of dinucleotide pyrophosphates. The protein is NAD-capped RNA hydrolase NudC of Mannheimia succiniciproducens (strain KCTC 0769BP / MBEL55E).